The primary structure comprises 105 residues: Iron-sulfur cluster assembly protein CyaY (105 aa).

Belongs to the frataxin family.

Its function is as follows. Involved in iron-sulfur (Fe-S) cluster assembly. May act as a regulator of Fe-S biogenesis. The sequence is that of Iron-sulfur cluster assembly protein CyaY from Photobacterium profundum (strain SS9).